A 676-amino-acid polypeptide reads, in one-letter code: Pescadillo homolog (676 aa).

The tract at residues T277 to D296 is disordered. Over residues S281–Q291 the composition is skewed to low complexity. The BRCT domain occupies E351 to P467. The segment at L471–K676 is disordered. The span at E494–A519 shows a compositional bias: acidic residues. The span at P520–E531 shows a compositional bias: basic and acidic residues. Acidic residues-rich tracts occupy residues S532–V541 and A548–E581. Residues E571–K676 adopt a coiled-coil conformation. Residues A582 to E592 are compositionally biased toward basic and acidic residues. A compositionally biased stretch (basic residues) spans K611–K624. Residues R625 to K635 are compositionally biased toward basic and acidic residues.

This sequence belongs to the pescadillo family. As to quaternary structure, component of the NOP7 complex, composed of erb1, nop7 and ytm1. The complex is held together by erb1, which interacts with nop7 via its N-terminal domain and with ytm1 via a high-affinity interaction between the seven-bladed beta-propeller domains of the 2 proteins. The NOP7 complex associates with the 66S pre-ribosome.

The protein localises to the nucleus. Its subcellular location is the nucleolus. The protein resides in the nucleoplasm. In terms of biological role, component of the NOP7 complex, which is required for maturation of the 25S and 5.8S ribosomal RNAs and formation of the 60S ribosome. In Aspergillus terreus (strain NIH 2624 / FGSC A1156), this protein is Pescadillo homolog (nop7).